Here is a 219-residue protein sequence, read N- to C-terminus: Ras-related protein Rab-3B (219 aa).

At Ala-2 the chain carries N-acetylalanine. GTP contacts are provided by Ser-31, Ser-32, Val-33, Gly-34, Lys-35, Thr-36, Ser-37, Pro-49, and Ser-53. Ser-32 contributes to the GDP binding site. Positions 34, 35, 36, and 37 each coordinate GDP. Thr-36 lines the Mg(2+) pocket. The Switch 1 signature appears at 45–58 (DTFTPAFVSTVGID). Residues Thr-54 and Asp-77 each contribute to the Mg(2+) site. Residues 78-96 (TAGQERYRTITTAYYRGAM) carry the Switch 2 motif. Residue Gly-80 coordinates GTP. Phosphothreonine; by LRRK2 is present on Thr-86. Residues Asn-135, Lys-136, and Asp-138 each coordinate GTP. Residues Asn-135, Lys-136, Asp-138, Met-139, Ala-166, and Lys-167 each contribute to the GDP site. Residues Ala-166 and Lys-167 each coordinate GTP. Phosphoserine occurs at positions 188 and 190. 2 S-geranylgeranyl cysteine lipidation sites follow: Cys-217 and Cys-219. At Cys-219 the chain carries Cysteine methyl ester.

This sequence belongs to the small GTPase superfamily. Rab family. As to quaternary structure, interacts with RIMS1, RIMS2, RPH3A and RPH3AL. The GTP-bound form interacts with GAS8/DRC4 (via coiled-coil domains). The GTP-bound form interacts with REP15. Interacts with GDI2, CHM and CHML; phosphorylation at Thr-86 disrupts these interactions. Interacts with MADD (via uDENN domain); the GTP-bound form is preferred for interaction. It depends on Mg(2+) as a cofactor. Post-translationally, phosphorylation of Thr-86 in the switch II region by LRRK2 prevents the association of RAB regulatory proteins, including CHM, CHML and RAB GDP dissociation inhibitor GDI2.

It localises to the cell membrane. The protein resides in the golgi apparatus. It catalyses the reaction GTP + H2O = GDP + phosphate + H(+). With respect to regulation, regulated by guanine nucleotide exchange factors (GEFs) which promote the exchange of bound GDP for free GTP. Regulated by GTPase activating proteins (GAPs) which increase the GTP hydrolysis activity. Inhibited by GDP dissociation inhibitors (GDIs) which prevent Rab-GDP dissociation. Functionally, the small GTPases Rab are key regulators of intracellular membrane trafficking, from the formation of transport vesicles to their fusion with membranes. Rabs cycle between an inactive GDP-bound form and an active GTP-bound form that is able to recruit to membranes different sets of downstream effectors directly responsible for vesicle formation, movement, tethering and fusion. The protein is Ras-related protein Rab-3B of Homo sapiens (Human).